Consider the following 347-residue polypeptide: Selenide, water dikinase (347 aa).

Sec17 is an active-site residue. Residue Sec17 is a non-standard amino acid, selenocysteine. Residues Lys20 and 48–50 contribute to the ATP site; that span reads TAD. Asp51 provides a ligand contact to Mg(2+). ATP contacts are provided by residues Asp68, Asp91, and 139–141; that span reads GHS. Asp91 is a Mg(2+) binding site. Residue Asp227 participates in Mg(2+) binding.

Belongs to the selenophosphate synthase 1 family. Class I subfamily. As to quaternary structure, homodimer. The cofactor is Mg(2+).

It carries out the reaction hydrogenselenide + ATP + H2O = selenophosphate + AMP + phosphate + 2 H(+). Its function is as follows. Synthesizes selenophosphate from selenide and ATP. This is Selenide, water dikinase from Haemophilus influenzae (strain 86-028NP).